The following is a 422-amino-acid chain: Probable biofilm formation methyltransferase WspC (422 aa).

The CheR-type methyltransferase domain occupies 1–264; it reads MNDRFERLLK…LSFVFRRTSE (264 aa). S-adenosyl-L-methionine-binding positions include Thr-67, Arg-71, Glu-108, Asp-132, 186–187, and 205–206; these read NL and RN. Positions 289–316 are disordered; that stretch reads ASIRPSPPPPAKPRQRLSSLVPPASGQP. The stretch at 354 to 387 is one TPR repeat; the sequence is ATVFYWLGLLSDVAGQEQEAQDFYRKALYLEPQH.

Monomer.

Its function is as follows. Involved in biofilm formation. The chain is Probable biofilm formation methyltransferase WspC (wspC) from Pseudomonas aeruginosa (strain ATCC 15692 / DSM 22644 / CIP 104116 / JCM 14847 / LMG 12228 / 1C / PRS 101 / PAO1).